A 361-amino-acid polypeptide reads, in one-letter code: Phosphoserine aminotransferase (361 aa).

R42 contributes to the L-glutamate binding site. Pyridoxal 5'-phosphate contacts are provided by residues 76 to 77 (AR), W102, T153, D173, and Q196. Residue K197 is modified to N6-(pyridoxal phosphate)lysine. 238 to 239 (NT) provides a ligand contact to pyridoxal 5'-phosphate.

Belongs to the class-V pyridoxal-phosphate-dependent aminotransferase family. SerC subfamily. As to quaternary structure, homodimer. Requires pyridoxal 5'-phosphate as cofactor.

Its subcellular location is the cytoplasm. It carries out the reaction O-phospho-L-serine + 2-oxoglutarate = 3-phosphooxypyruvate + L-glutamate. It catalyses the reaction 4-(phosphooxy)-L-threonine + 2-oxoglutarate = (R)-3-hydroxy-2-oxo-4-phosphooxybutanoate + L-glutamate. It functions in the pathway amino-acid biosynthesis; L-serine biosynthesis; L-serine from 3-phospho-D-glycerate: step 2/3. It participates in cofactor biosynthesis; pyridoxine 5'-phosphate biosynthesis; pyridoxine 5'-phosphate from D-erythrose 4-phosphate: step 3/5. In terms of biological role, catalyzes the reversible conversion of 3-phosphohydroxypyruvate to phosphoserine and of 3-hydroxy-2-oxo-4-phosphonooxybutanoate to phosphohydroxythreonine. The protein is Phosphoserine aminotransferase of Yersinia pestis (strain Pestoides F).